The following is a 669-amino-acid chain: DNA polymerase epsilon subunit B (669 aa).

Positions 96-115 (QISTRNGSADNLAKKAERSD) are disordered.

The protein belongs to the DNA polymerase epsilon subunit B family. Heterotetramer. Consists of four subunits: POL2, DPB2, DPB3 and DPB4.

It localises to the nucleus. Its function is as follows. As accessory component of the DNA polymerase epsilon (DNA polymerase II) participates in chromosomal DNA replication. The sequence is that of DNA polymerase epsilon subunit B (DPB2) from Debaryomyces hansenii (strain ATCC 36239 / CBS 767 / BCRC 21394 / JCM 1990 / NBRC 0083 / IGC 2968) (Yeast).